The sequence spans 366 residues: cAMP-dependent protein kinase regulatory subunit (366 aa).

Positions 1-121 (MSGGNEEDQL…SLESAMRKNL (121 aa)) are dimerization and phosphorylation. The disordered stretch occupies residues 55-87 (QRAQEGGNPDAADDDDIIVEPPKRSGGRRTGIS). Positions 82 to 86 (RRTGI) match the Pseudophosphorylation motif motif. At Ser-87 the chain carries Phosphoserine. 3',5'-cyclic AMP is bound by residues 122–239 (LFAH…SKVQ), Glu-187, Arg-196, 240–366 (ILAD…KLMT), Glu-311, and Arg-320.

This sequence belongs to the cAMP-dependent kinase regulatory chain family. Tetramer, composed of 2 regulatory (R) and 2 catalytic (C) subunits. In the presence of cAMP it dissociates into 2 active monomeric C subunits and an R dimer that binds four cAMP molecules. In terms of processing, the pseudophosphorylation site binds to the substrate-binding region of the catalytic chain but is not phosphorylated. The physiological significance of phosphorylations by other kinases is unclear.

Its subcellular location is the cytoplasm. It is found in the cytosol. Functionally, controls the rhythmic contraction of enteric muscles probably by regulating G-protein coupled receptor aex-2-mediated calcium influx in GABAergic DVB neurons. The protein is cAMP-dependent protein kinase regulatory subunit (kin-2) of Caenorhabditis elegans.